The primary structure comprises 122 residues: Protein YqjC (122 aa).

A signal peptide spans Met-1–Ala-20. The segment at Gln-65–Ile-100 is disordered. Basic and acidic residues predominate over residues Leu-66 to Ile-100.

This is Protein YqjC (yqjC) from Escherichia coli (strain K12).